A 453-amino-acid polypeptide reads, in one-letter code: Pup--protein ligase (453 aa).

Residue E9 participates in Mg(2+) binding. An ATP-binding site is contributed by R53. Mg(2+) is bound at residue Y55. D57 serves as the catalytic Proton acceptor. E63 contacts Mg(2+). Positions 66 and 420 each coordinate ATP.

It belongs to the Pup ligase/Pup deamidase family. Pup-conjugating enzyme subfamily.

It carries out the reaction ATP + [prokaryotic ubiquitin-like protein]-L-glutamate + [protein]-L-lysine = ADP + phosphate + N(6)-([prokaryotic ubiquitin-like protein]-gamma-L-glutamyl)-[protein]-L-lysine.. It functions in the pathway protein degradation; proteasomal Pup-dependent pathway. It participates in protein modification; protein pupylation. In terms of biological role, catalyzes the covalent attachment of the prokaryotic ubiquitin-like protein modifier Pup to the proteasomal substrate proteins, thereby targeting them for proteasomal degradation. This tagging system is termed pupylation. The ligation reaction involves the side-chain carboxylate of the C-terminal glutamate of Pup and the side-chain amino group of a substrate lysine. In Streptomyces griseus subsp. griseus (strain JCM 4626 / CBS 651.72 / NBRC 13350 / KCC S-0626 / ISP 5235), this protein is Pup--protein ligase.